A 31-amino-acid polypeptide reads, in one-letter code: Cytochrome b6-f complex subunit 6 (31 aa).

Residues 4–24 (LTSYFGFLLAALTITPALFIG) form a helical membrane-spanning segment.

The protein belongs to the PetL family. The 4 large subunits of the cytochrome b6-f complex are cytochrome b6, subunit IV (17 kDa polypeptide, PetD), cytochrome f and the Rieske protein, while the 4 small subunits are PetG, PetL, PetM and PetN. The complex functions as a dimer.

The protein resides in the plastid. Its subcellular location is the chloroplast thylakoid membrane. Its function is as follows. Component of the cytochrome b6-f complex, which mediates electron transfer between photosystem II (PSII) and photosystem I (PSI), cyclic electron flow around PSI, and state transitions. PetL is important for photoautotrophic growth as well as for electron transfer efficiency and stability of the cytochrome b6-f complex. The protein is Cytochrome b6-f complex subunit 6 of Agrostis stolonifera (Creeping bentgrass).